The sequence spans 718 residues: Amino-acid acetyltransferase, mitochondrial (718 aa).

The N-terminal 36 residues, 1–36 (MNPNAVWPRTAQSSLKKHQVSLCTCQRRSHYRLRSF), are a transit peptide targeting the mitochondrion. Positions 97 to 116 (QHQPDLPQKPTSAPASTAKI) are disordered. The N-acetyltransferase domain maps to 539 to 708 (RQPRLRLDDP…YEAVCRSIQP (170 aa)).

The protein belongs to the acetyltransferase family.

The protein resides in the mitochondrion. It catalyses the reaction L-glutamate + acetyl-CoA = N-acetyl-L-glutamate + CoA + H(+). It functions in the pathway amino-acid biosynthesis; L-arginine biosynthesis; N(2)-acetyl-L-ornithine from L-glutamate: step 1/4. Its function is as follows. N-acetylglutamate synthase involved in arginine biosynthesis. The protein is Amino-acid acetyltransferase, mitochondrial (arg2) of Aspergillus clavatus (strain ATCC 1007 / CBS 513.65 / DSM 816 / NCTC 3887 / NRRL 1 / QM 1276 / 107).